The sequence spans 331 residues: Protein RecA (331 aa).

66 to 73 (GPESSGKT) is an ATP binding site.

This sequence belongs to the RecA family.

It is found in the cytoplasm. Its function is as follows. Can catalyze the hydrolysis of ATP in the presence of single-stranded DNA, the ATP-dependent uptake of single-stranded DNA by duplex DNA, and the ATP-dependent hybridization of homologous single-stranded DNAs. It interacts with LexA causing its activation and leading to its autocatalytic cleavage. This Acholeplasma laidlawii (strain PG-8A) protein is Protein RecA.